Consider the following 128-residue polypeptide: MSSFKVAVLLIAVYGASQGTSIPGGWTRQDPTEARFLELAHFATSSQTEGREFYDTVVTVKEVETQVVAGMNYKLTIEISPSVCKIGEVQYSAEQCVPKDAQQKSTCVAVIYHVPWQNQKSVTSYRCE.

The signal sequence occupies residues 1–19 (MSSFKVAVLLIAVYGASQG). Positions 29-116 (QDPTEARFLE…CVAVIYHVPW (88 aa)) constitute a Cystatin domain. Cystine bridges form between cysteine 84–cysteine 96 and cysteine 107–cysteine 127.

Belongs to the cystatin family. Widely expressed. Detected in salivary glands (at protein level), gut (at protein level), ovaries, and Malpighian tubules.

The protein localises to the secreted. Inhibitor of cysteine proteinases with broad specificity for mammalian cathepsins, including endopeptidases (cathepsins L and S) and exopeptidases (cathepsins B, C and H). Also inhibits endogenous cathepsin B-like and cathepsin C-like proteinases. Does not inhibit human legumain. May mimic specific host-derived cystatin(s) to interfere with its/their function in controlling cathepsin-mediated proteolysis. Affects the function of antigen-presenting mouse dendritic cells by reducing the production of the pro-inflammatory cytokines TNF and interleukin-12, and proliferation of antigen-specific CD4+ T-cells, suggesting it may suppress the host adaptive immune response. It is noteworthy that immunization of mice with this protein reduces O.moubata survival in infestation experiments. The protein is Cystatin-2 of Ornithodoros moubata (Soft tick).